The chain runs to 543 residues: Cytochrome P450 monooxygenase sphH (543 aa).

2 helical membrane passes run 1–21 (MGPIHNYFGVVCLGIAASVYF) and 32–52 (IATFAVLLTGIAISKLLYQLF). Cysteine 487 provides a ligand contact to heme.

This sequence belongs to the cytochrome P450 family. Heme is required as a cofactor.

The protein resides in the membrane. It catalyses the reaction presphingofungin + 2 reduced [NADPH--hemoprotein reductase] + O2 = sphingofungin B1 + 2 oxidized [NADPH--hemoprotein reductase] + H2O + 2 H(+). Its pathway is secondary metabolite biosynthesis. Functionally, cytochrome P450 monooxygenase; part of the gene cluster that mediates the biosynthesis of sphingofungins, bioactive molecules acting as sphingolipid inhibitors via inhibiting serine palmitoyl transferase (SPT). Within the pathway, sphH catalyzes the conversion of presphingofungin into sphingofungin B1 via hydroxylagtion at position C-14. Sphingofungin biosynthesis starts with the PKS sphB that produces an C18 polyketide precursor 3-hydroxyoctadeca-4,10-dienoyl-ACP containing one delta-6 desaturation and one delta-12 desaturation. The aminoacyl transferase sphA uses the sphB product to produce 3-keto-presphingofungin by adding an aminomalonate molecule. SphF then reduces the C-3 ketone of 3-keto-presphingofungin which leads to presphingofungin. The cytochrome P450 monooxygenase sphH converts presphingofungin into sphingofungin B1 which is further converted to sphingofungin B by the dioxygenase sphC. SphC is also able to convert presphingofungin into sphingofungin B2. The acetyltransferase sphE acetylates sphingofungin B to produce sphingofungin C, but can also convert sphingofungin B1 into sphingofungin C1 and sphingofungin B2 into sphingofungin C2. Finally, sphingofungin C can be spontaneously converted into sphingofungin D. The chain is Cytochrome P450 monooxygenase sphH from Aspergillus fumigatus (strain CBS 144.89 / FGSC A1163 / CEA10) (Neosartorya fumigata).